The chain runs to 343 residues: Allergin-1 (343 aa).

A signal peptide spans Met1–Cys19. Over Arg20 to Lys227 the chain is Extracellular. Ig-like C2-type domains lie at Pro35–Ser118 and Pro128–Thr213. 6 N-linked (GlcNAc...) asparagine glycosylation sites follow: Asn51, Asn60, Asn89, Asn151, Asn157, and Asn182. Cystine bridges form between Cys56–Cys103 and Cys147–Cys196. A helical membrane pass occupies residues Leu228 to Val248. The Cytoplasmic portion of the chain corresponds to Leu249–Phe343. 2 short sequence motifs (ITIM motif) span residues Leu311–Pro316 and Tyr336–Leu341. Tyr313 and Tyr338 each carry phosphotyrosine.

In terms of assembly, monomer. Interacts (tyrosine-phosphorylated) with PTPN6, PTPN11 and INPP5D. Post-translationally, N-glycosylated. As to expression, expressed in myeloid cells (dendritic cells, macrophages and neutrophils, weak expression on B-cells but not in T-cells or natural killer cells), peripheral blood basophils and mast cells (at protein level).

It localises to the cell membrane. Functionally, immunoglobulin-like receptor which plays an inhibitory role in degranulation of mast cells. Negatively regulates IgE-mediated mast cell activation and suppresses the type I immediate hypersensitivity reaction. The sequence is that of Allergin-1 (MILR1) from Homo sapiens (Human).